A 418-amino-acid polypeptide reads, in one-letter code: Inner capsid protein sigma-2 (418 aa).

This sequence belongs to the orthoreovirus sigma-1 protein family. Interacts with protein mu-NS; in viral inclusions.

It is found in the virion. Inner capsid (core) component. The sequence is that of Inner capsid protein sigma-2 (S2) from Reovirus type 3 (strain Dearing) (T3D).